We begin with the raw amino-acid sequence, 1116 residues long: Phosphatidylinositol 4-kinase beta 2 (1116 aa).

The region spanning 1 to 143 is the PIK helical domain; the sequence is MQMAQFLSLV…SRIQEKCQIA (143 aa). 8 repeat units span residues 210–229, 242–261, 264–283, 286–304, 307–326, 329–348, 351–370, and 378–396. The tract at residues 210–507 is 11 X 20 AA approximate repeats (PPC); it reads ADDNKIFKRL…FRDRDRSVED (298 aa). A compositionally biased stretch (basic and acidic residues) spans 394–404; it reads EKRNGNERNET. Residues 394-417 are disordered; sequence EKRNGNERNETDETVYTDETSGED. Residues 405 to 415 are compositionally biased toward acidic residues; it reads DETVYTDETSG. Repeat unit 9 spans residues 418–436; that stretch reads NGREGFFKKLFKEKFEDKP. Phosphoserine is present on residues S447 and S452. 2 tandem repeats follow at residues 452–470 and 488–507. Disordered regions lie at residues 515–540 and 794–813; these read KYKE…LPNN and GEAP…SDAQ. A PI3K/PI4K catalytic domain is found at 830 to 1101; the sequence is EFWEGKRLRI…LISSSLDAWR (272 aa). Positions 836-842 are G-loop; sequence RLRIRKD. The interval 964-972 is catalytic loop; it reads QIKDRHNGN. Residues 983-1007 form an activation loop region; that stretch reads HIDFGFMLSNSPGGVNFESAPFKLT.

It belongs to the PI3/PI4-kinase family. Type III PI4K subfamily.

The protein resides in the cell membrane. Its subcellular location is the golgi apparatus. The protein localises to the trans-Golgi network. It localises to the cytoplasmic vesicle membrane. The enzyme catalyses a 1,2-diacyl-sn-glycero-3-phospho-(1D-myo-inositol) + ATP = a 1,2-diacyl-sn-glycero-3-phospho-(1D-myo-inositol 4-phosphate) + ADP + H(+). Its function is as follows. Acts on phosphatidylinositol (PtdIns) in the first committed step in the production of the second messenger inositol-1,4,5-trisphosphate. Necessary for proper organization of the trans-Golgi network (TGN) and post-Golgi secretion in root hairs. Together with PI4KB1, required during polarized root hair expansion and pollen tube elongation. Functions redundantly with PI4KB1 upstream of the cold response phosphoinositide-dependent phospholipase C (PI-PLC) pathway. The sequence is that of Phosphatidylinositol 4-kinase beta 2 (PI4KB2) from Arabidopsis thaliana (Mouse-ear cress).